Consider the following 269-residue polypeptide: MTSVKLDLDAADLRISRGSVPASTQLAEALKAQIIQQRLPRGGRLPSERELIDRSGLSRVTVRAAVGMLQRQGWLVRRQGLGTFVADPVEQELSCGVRTITEVLLSCGVTPQVDVLSHQTGPAPQRISETLGLVEVLCIRRRIRTGDQPLALVTAYLPPGVGPAVEPLLSGSADTETTYAMWERRLGVRIAQATHEIHAAGASPDVADALGLAVGSPVLVVDRTSYTNDGKPLEVVVFHHRPERYQFSVTLPRTLPGSGAGIIEKRDFA.

The HTH gntR-type domain occupies 20–88 (VPASTQLAEA…QGLGTFVADP (69 aa)). Positions 48–67 (ERELIDRSGLSRVTVRAAVG) form a DNA-binding region, H-T-H motif.

Homodimer.

DNA-binding activity is increased in the presence of L-arabinose and inhibited by the small molecule I-OMe-Tyrphostin. In terms of biological role, transcriptional regulator required for survival in oxidative stress and for establishing infection in host tissues. Regulates the expression of a subset of genes involved in oxidative stress adaptation and virulence, enabling the bacteria to adapt and persist in host tissues. This chain is HTH-type transcriptional regulator Rv0792c, found in Mycobacterium tuberculosis (strain ATCC 25618 / H37Rv).